A 429-amino-acid polypeptide reads, in one-letter code: GTPase Obg (429 aa).

Positions 1–158 (MFYDTAKIYV…RWLLLELKLL (158 aa)) constitute an Obg domain. The OBG-type G domain occupies 159–329 (ADVGLVGYPN…LIYRLWEIIS (171 aa)). GTP-binding positions include 165–172 (GYPNAGKS), 190–194 (FTTLT), 212–215 (DIPG), 282–285 (NKMD), and 310–312 (SAL). Mg(2+) is bound by residues serine 172 and threonine 192. An OCT domain is found at 344–421 (IKEQPEEGFV…IGKFEFYFVD (78 aa)).

It belongs to the TRAFAC class OBG-HflX-like GTPase superfamily. OBG GTPase family. Monomer. Mg(2+) serves as cofactor.

The protein localises to the cytoplasm. In terms of biological role, an essential GTPase which binds GTP, GDP and possibly (p)ppGpp with moderate affinity, with high nucleotide exchange rates and a fairly low GTP hydrolysis rate. Plays a role in control of the cell cycle, stress response, ribosome biogenesis and in those bacteria that undergo differentiation, in morphogenesis control. This Carboxydothermus hydrogenoformans (strain ATCC BAA-161 / DSM 6008 / Z-2901) protein is GTPase Obg.